Consider the following 185-residue polypeptide: MRIGLYGGSFNPAHAGHLHVSRTALRRLRLDRVWWLVTPGNPLKDHGVLAPLDERVAQARALATDPRIAVTGFEGGIGSRYTADTLRWLVRRQPALHFVWIMGADSLGTFHRWRRFDEILSLMPVAVIDRPGYTLTAPSARAAQAFASARIQEADAPTLAIRPTPAWTFLHGPRSALSSTALRTR.

The protein belongs to the NadD family.

It catalyses the reaction nicotinate beta-D-ribonucleotide + ATP + H(+) = deamido-NAD(+) + diphosphate. It functions in the pathway cofactor biosynthesis; NAD(+) biosynthesis; deamido-NAD(+) from nicotinate D-ribonucleotide: step 1/1. Catalyzes the reversible adenylation of nicotinate mononucleotide (NaMN) to nicotinic acid adenine dinucleotide (NaAD). In Methylorubrum extorquens (strain PA1) (Methylobacterium extorquens), this protein is Probable nicotinate-nucleotide adenylyltransferase.